Here is a 152-residue protein sequence, read N- to C-terminus: Large ribosomal subunit protein uL15 (152 aa).

The segment at Met1–Gln56 is disordered. Positions Ser14–Arg23 are enriched in basic residues. The span at Ile25–Met37 shows a compositional bias: gly residues.

This sequence belongs to the universal ribosomal protein uL15 family. In terms of assembly, part of the 50S ribosomal subunit.

In terms of biological role, binds to the 23S rRNA. This chain is Large ribosomal subunit protein uL15, found in Prochlorococcus marinus (strain MIT 9515).